The following is a 219-amino-acid chain: Probable GTP-binding protein EngB (219 aa).

Residues 31-205 (VGVEIAFAGR…LSILNEWCHP (175 aa)) enclose the EngB-type G domain. GTP contacts are provided by residues 39-46 (GRSNAGKS), 66-70 (GRTQL), 84-87 (DLPG), 151-154 (TKSD), and 184-186 (FSA). Mg(2+) is bound by residues serine 46 and threonine 68.

This sequence belongs to the TRAFAC class TrmE-Era-EngA-EngB-Septin-like GTPase superfamily. EngB GTPase family. Mg(2+) serves as cofactor.

Functionally, necessary for normal cell division and for the maintenance of normal septation. The protein is Probable GTP-binding protein EngB of Shewanella sp. (strain W3-18-1).